A 512-amino-acid polypeptide reads, in one-letter code: Maturase K (512 aa).

It belongs to the intron maturase 2 family. MatK subfamily.

It is found in the plastid. It localises to the chloroplast. In terms of biological role, usually encoded in the trnK tRNA gene intron. Probably assists in splicing its own and other chloroplast group II introns. The protein is Maturase K of Acer platanoides (Norway maple).